We begin with the raw amino-acid sequence, 209 residues long: Uracil phosphoribosyltransferase (209 aa).

Residues Arg-79, Arg-104, and 131–139 (DPMLATGGS) contribute to the 5-phospho-alpha-D-ribose 1-diphosphate site. Uracil-binding positions include Ile-194 and 199–201 (GDA). Residue Asp-200 coordinates 5-phospho-alpha-D-ribose 1-diphosphate.

Belongs to the UPRTase family. Mg(2+) is required as a cofactor.

The enzyme catalyses UMP + diphosphate = 5-phospho-alpha-D-ribose 1-diphosphate + uracil. It functions in the pathway pyrimidine metabolism; UMP biosynthesis via salvage pathway; UMP from uracil: step 1/1. Allosterically activated by GTP. Catalyzes the conversion of uracil and 5-phospho-alpha-D-ribose 1-diphosphate (PRPP) to UMP and diphosphate. The sequence is that of Uracil phosphoribosyltransferase from Ligilactobacillus salivarius (strain UCC118) (Lactobacillus salivarius).